The primary structure comprises 197 residues: Probable calcium-binding protein CML21 (197 aa).

Positions Met-1 to His-33 are disordered. The span at Ser-9 to Gln-30 shows a compositional bias: low complexity. 3 consecutive EF-hand domains span residues Ala-37–Arg-72, Glu-126–Pro-161, and Ala-164–Asn-197. Ca(2+)-binding residues include Asp-50, Asp-52, Asp-54, Glu-61, Asp-139, Asp-141, Asp-143, Tyr-145, Glu-150, Asp-177, Asp-179, Asp-181, Arg-183, and Glu-188.

In terms of biological role, potential calcium sensor. The chain is Probable calcium-binding protein CML21 (CML21) from Oryza sativa subsp. japonica (Rice).